Reading from the N-terminus, the 264-residue chain is GTP cyclohydrolase FolE2 (264 aa).

It belongs to the GTP cyclohydrolase IV family.

The catalysed reaction is GTP + H2O = 7,8-dihydroneopterin 3'-triphosphate + formate + H(+). It participates in cofactor biosynthesis; 7,8-dihydroneopterin triphosphate biosynthesis; 7,8-dihydroneopterin triphosphate from GTP: step 1/1. Functionally, converts GTP to 7,8-dihydroneopterin triphosphate. This chain is GTP cyclohydrolase FolE2, found in Nitratidesulfovibrio vulgaris (strain ATCC 29579 / DSM 644 / CCUG 34227 / NCIMB 8303 / VKM B-1760 / Hildenborough) (Desulfovibrio vulgaris).